Reading from the N-terminus, the 418-residue chain is Tyrosine--tRNA ligase (418 aa).

Tyrosine 39 is a binding site for L-tyrosine. A 'HIGH' region motif is present at residues 44-53 (CTAASLHVGH). L-tyrosine-binding residues include tyrosine 176 and glutamine 180. The 'KMSKS' region motif lies at 236–240 (KMGKT). Residue lysine 239 coordinates ATP. The S4 RNA-binding domain maps to 350 to 418 (IGVLVAFAEK…KKKHVLLRLA (69 aa)).

It belongs to the class-I aminoacyl-tRNA synthetase family. TyrS type 1 subfamily. Homodimer.

The protein resides in the cytoplasm. The enzyme catalyses tRNA(Tyr) + L-tyrosine + ATP = L-tyrosyl-tRNA(Tyr) + AMP + diphosphate + H(+). Functionally, catalyzes the attachment of tyrosine to tRNA(Tyr) in a two-step reaction: tyrosine is first activated by ATP to form Tyr-AMP and then transferred to the acceptor end of tRNA(Tyr). The polypeptide is Tyrosine--tRNA ligase (Rhodopseudomonas palustris (strain ATCC BAA-98 / CGA009)).